Reading from the N-terminus, the 222-residue chain is ATP synthase F(0) complex subunit a (222 aa).

The next 6 helical transmembrane spans lie at 7–27 (AFFDVPVGTMMLAIAFPAILL), 64–84 (WSLMLITLTLFIGLTNLLGLL), 93–113 (QLTVNLSMAIPLWTGTVILGF), 132–152 (FLIPMIIIIETISLLIRPVTL), 160–180 (ITAGHLLIHLTGTAALTLLSI), and 185–205 (ITVTFITVVVLTILELAVALI).

This sequence belongs to the ATPase A chain family. As to quaternary structure, component of the ATP synthase complex composed at least of ATP5F1A/subunit alpha, ATP5F1B/subunit beta, ATP5MC1/subunit c (homooctomer), MT-ATP6/subunit a, MT-ATP8/subunit 8, ATP5ME/subunit e, ATP5MF/subunit f, ATP5MG/subunit g, ATP5MK/subunit k, ATP5MJ/subunit j, ATP5F1C/subunit gamma, ATP5F1D/subunit delta, ATP5F1E/subunit epsilon, ATP5PF/subunit F6, ATP5PB/subunit b, ATP5PD/subunit d, ATP5PO/subunit OSCP. ATP synthase complex consists of a soluble F(1) head domain (subunits alpha(3) and beta(3)) - the catalytic core - and a membrane F(0) domain - the membrane proton channel (subunits c, a, 8, e, f, g, k and j). These two domains are linked by a central stalk (subunits gamma, delta, and epsilon) rotating inside the F1 region and a stationary peripheral stalk (subunits F6, b, d, and OSCP). Interacts with DNAJC30; interaction is direct.

It is found in the mitochondrion inner membrane. The catalysed reaction is H(+)(in) = H(+)(out). Its function is as follows. Subunit a, of the mitochondrial membrane ATP synthase complex (F(1)F(0) ATP synthase or Complex V) that produces ATP from ADP in the presence of a proton gradient across the membrane which is generated by electron transport complexes of the respiratory chain. ATP synthase complex consist of a soluble F(1) head domain - the catalytic core - and a membrane F(1) domain - the membrane proton channel. These two domains are linked by a central stalk rotating inside the F(1) region and a stationary peripheral stalk. During catalysis, ATP synthesis in the catalytic domain of F(1) is coupled via a rotary mechanism of the central stalk subunits to proton translocation. With the subunit c (ATP5MC1), forms the proton-conducting channel in the F(0) domain, that contains two crucial half-channels (inlet and outlet) that facilitate proton movement from the mitochondrial intermembrane space (IMS) into the matrix. Protons are taken up via the inlet half-channel and released through the outlet half-channel, following a Grotthuss mechanism. The protein is ATP synthase F(0) complex subunit a of Mammuthus primigenius (Siberian woolly mammoth).